The primary structure comprises 214 residues: Ribonuclease HII (214 aa).

The 189-residue stretch at 26–214 (EIVCGVDEAG…PVREAFDLIR (189 aa)) folds into the RNase H type-2 domain. A divalent metal cation is bound by residues aspartate 32, glutamate 33, and aspartate 124.

It belongs to the RNase HII family. Mn(2+) serves as cofactor. Mg(2+) is required as a cofactor.

The protein localises to the cytoplasm. It carries out the reaction Endonucleolytic cleavage to 5'-phosphomonoester.. Endonuclease that specifically degrades the RNA of RNA-DNA hybrids. The sequence is that of Ribonuclease HII from Burkholderia mallei (strain NCTC 10247).